A 313-amino-acid polypeptide reads, in one-letter code: Epoxide hydrolase 1 (313 aa).

In terms of domain architecture, AB hydrolase-1 spans 25-299 (PAVLFLHGFP…AAHFINQEKA (275 aa)). Asp100 serves as the catalytic Nucleophile. An epoxide is bound at residue Tyr149. Tyr227 functions as the Proton donor in the catalytic mechanism. The active-site Proton acceptor is the His292.

This sequence belongs to the AB hydrolase superfamily. Epoxide hydrolase family. As to quaternary structure, homodimer. In terms of tissue distribution, highly expressed in fruits 15 days after anthesis (15-DAA).

The catalysed reaction is an epoxide + H2O = an ethanediol. It carries out the reaction (24S)-24,25-epoxycucurbitadienol + H2O = (24R)-24,25-dihydroxycucurbitadienol. It functions in the pathway secondary metabolite biosynthesis; terpenoid biosynthesis. Its function is as follows. Epoxide hydrolase involved in the biosynthesis of cucurbitacin and mogroside tetracyclic triterpene natural products (e.g. siamenoside I and mogrosides IV, V and VI). Cucurbitacins have cytotoxic properties and exhibit deterrent taste as a defense barrier against herbivores. Mogrosides are nonsugar highly oxygenated compounds used as high-intensity zero-calorie sweeteners; they also possess pharmacological properties such as regulating immunity, lowering blood sugar and lipid levels, protecting the liver, and acting as antioxidants and antitumor agents. Catalyzes the hydrolysis of aromatic epoxide-containing substrates, such as the conversion of 24,25-epoxycucurbitadienol to 24,25-dihydroxycucurbitadienol. This chain is Epoxide hydrolase 1, found in Siraitia grosvenorii (Monk's fruit).